A 447-amino-acid chain; its full sequence is MTTILKHLPAGQRIGIAFSGGLDTSAALLWMRQKGAVPYAYTANLGQPDEDDYDAIPRRAMEYGAENARLIDCRKQLVAEGIAAIQCGAFHNTTGGLTYFNTTPLGRAVTGTMLVAAMKEDGVNIWGDGSTYKGNDIERFYRYGLLTNAELQIYKPWLDTDFIDELGGRHEMSEFMIACGFDYKMSVEKAYSTDSNMLGATHEAKDLEFLNSSVKIVNPIMGVKFWDESVKIPAEVVTVRFEQGHPVALNGKTFSDDVEMMLEANRIGGRHGLGMSDQIENRIIEAKSRGIYEAPGMALLHIAYERLLTGIHNEDTIEQYHSHGRQLGKLLYQGRWFDSQALMLRDGLQRWVASQITGEVTLELRRGNDYSILNTVSDNLTYKPERLTMEKGDSVFSPDDRIGQLTMRNLDITDTREKLFGYAKAGLLTASSATGLPQVENLENKAK.

Residues 17–25 (AFSGGLDTS) and alanine 43 each bind ATP. Tyrosine 99 serves as a coordination point for L-citrulline. The ATP site is built by glycine 129 and threonine 131. L-aspartate is bound by residues threonine 131, asparagine 135, and aspartate 136. Asparagine 135 is a binding site for L-citrulline. Aspartate 136 contacts ATP. The L-citrulline site is built by arginine 139 and serine 192. ATP is bound at residue aspartate 194. L-citrulline contacts are provided by threonine 201, glutamate 203, and glutamate 280.

Belongs to the argininosuccinate synthase family. Type 2 subfamily. In terms of assembly, homotetramer.

The protein localises to the cytoplasm. The catalysed reaction is L-citrulline + L-aspartate + ATP = 2-(N(omega)-L-arginino)succinate + AMP + diphosphate + H(+). Its pathway is amino-acid biosynthesis; L-arginine biosynthesis; L-arginine from L-ornithine and carbamoyl phosphate: step 2/3. In Salmonella paratyphi B (strain ATCC BAA-1250 / SPB7), this protein is Argininosuccinate synthase.